The primary structure comprises 572 residues: Transducin-like enhancer protein 6 (572 aa).

Disordered stretches follow at residues 1-30 (MTSR…SSPT), 92-121 (QSEE…SSFE), and 174-236 (KAKP…VQEP). Over residues 14 to 30 (KSTSPCPGISNSESSPT) the composition is skewed to polar residues. 7 WD repeats span residues 284–322 (AHGE…AEDR), 332–372 (TPGA…LHVK), 377–416 (CAGL…VVRD), 419–456 (GYPD…KPLE), 458–497 (QFKS…RHMV), 499–538 (QKDS…KVFE), and 540–571 (PEMS…YQIT). Residue serine 510 is modified to Phosphoserine; by PKA.

This sequence belongs to the WD repeat Groucho/TLE family. Homodimers. Component of the subcortical maternal complex (SCMC), at least composed of NLRP5, KHDC3, OOEP, and TLE6. Within the complex, interacts with NLRP5, KHDC3 and OOEP. The SCMC may facilitate translocation of its components between the nuclear and cytoplasmic compartments. As part of the SCMC interacts with the SCMC-associated protein ZBED3. As part of the SCMC interacts with the SCMC-associated protein NLRP4F. As part of the SCMC interacts with the SCMC-associated protein CFL1/Cofilin-1. Interacts with FOXG1/BF-1; the interaction inhibits TLE1 interaction with FOXG1/BF-1. Interacts with NFATC1. Interacts with PAX6. As to quaternary structure, component of the subcortical maternal complex (SCMC), at least composed of NLRP5, KHDC3L, OOEP, and TLE6 isoform 1. Within the complex, interacts with NLRP5, KHDC3L and OOEP. The SCMC may facilitate translocation of its components between the nuclear and cytoplasmic compartments.

The protein resides in the cytoplasm. It is found in the nucleus. Functionally, component of the subcortical maternal complex (SCMC), a multiprotein complex that plays a key role in early embryonic development. The SCMC complex is a structural constituent of cytoplasmic lattices, which consist in fibrous structures found in the cytoplasm of oocytes and preimplantation embryos. They are required to store maternal proteins critical for embryonic development, such as proteins that control epigenetic reprogramming of the preimplantation embryo, and prevent their degradation or activation. Also required for spermatogenesis: regulates spermatogonia proliferation and cell cycle progression, potentially via regulation of cell cycle regulatory genes such as; CEBPB, CEBPA, CSF3, PCNA, and CDK4. Suppresses FOXG1/BF-1-mediated transcriptional repression by inhibiting interaction of the transcriptional corepressor TLE1 with FOXG1 which promotes cortical neuron differentiation. Acts as a transcriptional corepressor of NFATC1-mediated gene expression by contributing to PAX6-mediated repression. Its function is as follows. Component of the subcortical maternal complex (SCMC), a multiprotein complex that plays a key role in early embryonic development. This is Transducin-like enhancer protein 6 from Homo sapiens (Human).